Here is a 487-residue protein sequence, read N- to C-terminus: Aspartyl/glutamyl-tRNA(Asn/Gln) amidotransferase subunit B (487 aa).

It belongs to the GatB/GatE family. GatB subfamily. In terms of assembly, heterotrimer of A, B and C subunits.

The catalysed reaction is L-glutamyl-tRNA(Gln) + L-glutamine + ATP + H2O = L-glutaminyl-tRNA(Gln) + L-glutamate + ADP + phosphate + H(+). The enzyme catalyses L-aspartyl-tRNA(Asn) + L-glutamine + ATP + H2O = L-asparaginyl-tRNA(Asn) + L-glutamate + ADP + phosphate + 2 H(+). In terms of biological role, allows the formation of correctly charged Asn-tRNA(Asn) or Gln-tRNA(Gln) through the transamidation of misacylated Asp-tRNA(Asn) or Glu-tRNA(Gln) in organisms which lack either or both of asparaginyl-tRNA or glutaminyl-tRNA synthetases. The reaction takes place in the presence of glutamine and ATP through an activated phospho-Asp-tRNA(Asn) or phospho-Glu-tRNA(Gln). This chain is Aspartyl/glutamyl-tRNA(Asn/Gln) amidotransferase subunit B, found in Chlamydia abortus (strain DSM 27085 / S26/3) (Chlamydophila abortus).